The chain runs to 250 residues: 2,3-bisphosphoglycerate-dependent phosphoglycerate mutase (250 aa).

Substrate contacts are provided by residues 8–15 (RHGQSAWN), 21–22 (TG), arginine 60, 87–90 (ERHY), lysine 98, 114–115 (RR), and 183–184 (GN). Histidine 9 (tele-phosphohistidine intermediate) is an active-site residue. Residue glutamate 87 is the Proton donor/acceptor of the active site.

This sequence belongs to the phosphoglycerate mutase family. BPG-dependent PGAM subfamily. In terms of assembly, homodimer.

It catalyses the reaction (2R)-2-phosphoglycerate = (2R)-3-phosphoglycerate. It participates in carbohydrate degradation; glycolysis; pyruvate from D-glyceraldehyde 3-phosphate: step 3/5. Its function is as follows. Catalyzes the interconversion of 2-phosphoglycerate and 3-phosphoglycerate. The sequence is that of 2,3-bisphosphoglycerate-dependent phosphoglycerate mutase from Nitratidesulfovibrio vulgaris (strain ATCC 29579 / DSM 644 / CCUG 34227 / NCIMB 8303 / VKM B-1760 / Hildenborough) (Desulfovibrio vulgaris).